A 966-amino-acid polypeptide reads, in one-letter code: RNA polymerase-associated protein RapA (966 aa).

The region spanning 163 to 337 (EVGRRIAPRV…FARLHLLDPN (175 aa)) is the Helicase ATP-binding domain. 176–183 (DEVGLGKT) is a binding site for ATP. The DEAH box motif lies at 283 to 286 (DEAH). The 155-residue stretch at 489–643 (RVDWLINLVK…TCPMGAILHE (155 aa)) folds into the Helicase C-terminal domain.

Belongs to the SNF2/RAD54 helicase family. RapA subfamily. Interacts with the RNAP. Has a higher affinity for the core RNAP than for the holoenzyme. Its ATPase activity is stimulated by binding to RNAP.

Functionally, transcription regulator that activates transcription by stimulating RNA polymerase (RNAP) recycling in case of stress conditions such as supercoiled DNA or high salt concentrations. Probably acts by releasing the RNAP, when it is trapped or immobilized on tightly supercoiled DNA. Does not activate transcription on linear DNA. Probably not involved in DNA repair. The sequence is that of RNA polymerase-associated protein RapA from Histophilus somni (strain 129Pt) (Haemophilus somnus).